We begin with the raw amino-acid sequence, 210 residues long: 3,4-dihydroxy-2-butanone 4-phosphate synthase (210 aa).

D-ribulose 5-phosphate contacts are provided by residues 33–34 (RE), Asp38, 146–150 (RRGHT), and Glu170. Glu34 serves as a coordination point for Mg(2+). A Mg(2+)-binding site is contributed by His149.

It belongs to the DHBP synthase family. In terms of assembly, homodimer. Mg(2+) is required as a cofactor. It depends on Mn(2+) as a cofactor.

The catalysed reaction is D-ribulose 5-phosphate = (2S)-2-hydroxy-3-oxobutyl phosphate + formate + H(+). It functions in the pathway cofactor biosynthesis; riboflavin biosynthesis; 2-hydroxy-3-oxobutyl phosphate from D-ribulose 5-phosphate: step 1/1. Catalyzes the conversion of D-ribulose 5-phosphate to formate and 3,4-dihydroxy-2-butanone 4-phosphate. The sequence is that of 3,4-dihydroxy-2-butanone 4-phosphate synthase from Chromobacterium violaceum (strain ATCC 12472 / DSM 30191 / JCM 1249 / CCUG 213 / NBRC 12614 / NCIMB 9131 / NCTC 9757 / MK).